The following is a 199-amino-acid chain: Cytochrome c oxidase assembly protein CtaG (199 aa).

At 1–12 (MTNTPQTPPKER) the chain is on the cytoplasmic side. A helical; Signal-anchor for type II membrane protein membrane pass occupies residues 13-35 (ANGVIVGACLAFVAGMVGMAYAA). Residues 36–199 (VPLYDMFCRV…VKDGETENRL (164 aa)) lie on the Periplasmic side of the membrane.

Belongs to the COX11/CtaG family.

Its subcellular location is the cell inner membrane. In terms of biological role, exerts its effect at some terminal stage of cytochrome c oxidase synthesis, probably by being involved in the insertion of the copper B into subunit I. This Sinorhizobium fredii (strain NBRC 101917 / NGR234) protein is Cytochrome c oxidase assembly protein CtaG.